Consider the following 304-residue polypeptide: D-alanine--D-alanine ligase (304 aa).

One can recognise an ATP-grasp domain in the interval 103–299 (KLIWQALGLP…FADLCIEILK (197 aa)). 129-184 (EEKLGLPMFVKPAAEGSSVGVVKVKGKGRLKSVYEELKHLQGEIIAERFIGGGEYS) serves as a coordination point for ATP. Aspartate 253, glutamate 266, and asparagine 268 together coordinate Mg(2+).

This sequence belongs to the D-alanine--D-alanine ligase family. Mg(2+) is required as a cofactor. The cofactor is Mn(2+).

The protein localises to the cytoplasm. The catalysed reaction is 2 D-alanine + ATP = D-alanyl-D-alanine + ADP + phosphate + H(+). It functions in the pathway cell wall biogenesis; peptidoglycan biosynthesis. Cell wall formation. The protein is D-alanine--D-alanine ligase of Neisseria meningitidis serogroup C / serotype 2a (strain ATCC 700532 / DSM 15464 / FAM18).